A 289-amino-acid polypeptide reads, in one-letter code: 4-hydroxybenzoate octaprenyltransferase (289 aa).

8 helical membrane-spanning segments follow: residues 21-40 (PIGT…LAAG), 95-115 (VLAL…TMNS), 116-136 (LTIA…FMKR), 138-158 (IPIP…MAYA), 161-181 (ANAL…WTIA), 213-233 (IIGV…QLMG), 236-256 (AWYY…QRLI), and 268-288 (FLNN…NYLL).

Belongs to the UbiA prenyltransferase family. Mg(2+) is required as a cofactor.

Its subcellular location is the cell inner membrane. It catalyses the reaction all-trans-octaprenyl diphosphate + 4-hydroxybenzoate = 4-hydroxy-3-(all-trans-octaprenyl)benzoate + diphosphate. Its pathway is cofactor biosynthesis; ubiquinone biosynthesis. Catalyzes the prenylation of para-hydroxybenzoate (PHB) with an all-trans polyprenyl group. Mediates the second step in the final reaction sequence of ubiquinone-8 (UQ-8) biosynthesis, which is the condensation of the polyisoprenoid side chain with PHB, generating the first membrane-bound Q intermediate 3-octaprenyl-4-hydroxybenzoate. This chain is 4-hydroxybenzoate octaprenyltransferase, found in Aeromonas salmonicida (strain A449).